A 406-amino-acid chain; its full sequence is Phosphoglycerate kinase (406 aa).

Residues 22 to 24, Arg-37, 60 to 63, Arg-119, and Arg-152 each bind substrate; these read DLN and HLGN. Residues Lys-202, Glu-325, and 355-358 each bind ATP; that span reads GGDT.

The protein belongs to the phosphoglycerate kinase family. Monomer.

The protein localises to the cytoplasm. The catalysed reaction is (2R)-3-phosphoglycerate + ATP = (2R)-3-phospho-glyceroyl phosphate + ADP. Its pathway is carbohydrate degradation; glycolysis; pyruvate from D-glyceraldehyde 3-phosphate: step 2/5. In Orientia tsutsugamushi (strain Ikeda) (Rickettsia tsutsugamushi), this protein is Phosphoglycerate kinase.